We begin with the raw amino-acid sequence, 247 residues long: Probable transcriptional regulatory protein lpp1249 (247 aa).

The protein belongs to the TACO1 family.

The protein localises to the cytoplasm. The protein is Probable transcriptional regulatory protein lpp1249 of Legionella pneumophila (strain Paris).